The sequence spans 354 residues: NADH-quinone oxidoreductase subunit H (354 aa).

8 helical membrane-spanning segments follow: residues 22-42 (ILIRAVLIVVPLLLCVAYLIL), 91-111 (YLIAPLMVLMPAVAIWAVIPF), 124-144 (LLYVMAISSVGVYGVILAGWA), 168-188 (MGFALVTVLMVSGSLNLSAIV), 203-223 (VLSWNWIPLLPMFGVYFISGV), 255-275 (LFFLAEYINMIIISTITALLF), 291-311 (IPGFFWLLIKVFLLLSVFIWI), and 326-346 (LGWKVFIPLTVGWLIIVAIWI).

The protein belongs to the complex I subunit 1 family. As to quaternary structure, NDH-1 is composed of 14 different subunits. Subunits NuoA, H, J, K, L, M, N constitute the membrane sector of the complex.

The protein resides in the cell inner membrane. It carries out the reaction a quinone + NADH + 5 H(+)(in) = a quinol + NAD(+) + 4 H(+)(out). Functionally, NDH-1 shuttles electrons from NADH, via FMN and iron-sulfur (Fe-S) centers, to quinones in the respiratory chain. The immediate electron acceptor for the enzyme in this species is believed to be ubiquinone. Couples the redox reaction to proton translocation (for every two electrons transferred, four hydrogen ions are translocated across the cytoplasmic membrane), and thus conserves the redox energy in a proton gradient. This subunit may bind ubiquinone. The chain is NADH-quinone oxidoreductase subunit H from Cupriavidus pinatubonensis (strain JMP 134 / LMG 1197) (Cupriavidus necator (strain JMP 134)).